We begin with the raw amino-acid sequence, 1047 residues long: Cation efflux system protein CusA (1047 aa).

A run of 12 helical transmembrane segments spans residues 14 to 34 (FLVLMGALFLSIWGTWTIINT), 338 to 358 (LSGKLLEEFIVVAVVCALFLW), 363 to 383 (ALVAIISLPLGLCIAFIVMHF), 391 to 411 (MSLGGIAIAVGAMVDAAIVMI), 446 to 466 (VGPALFISLLIITLSFIPIFT), 485 to 505 (AMAGAALLAIVVIPILMGYWI), 532 to 552 (VLHWPKTTLLVAALSVLTVLW), 871 to 891 (KLKLMVPMTLMIIFVLLYLAF), 898 to 918 (LLIISSVPFALVGGIWLLWWM), 928 to 948 (TGFIALAGVAAEFGVVMLMYL), 985 to 1005 (AMTVAVIIAGLLPILWGTGAG), and 1012 to 1032 (IAAPMIGGMITAPLLSLFIIP).

Belongs to the resistance-nodulation-cell division (RND) (TC 2.A.6) family. The cus efflux system is composed of CusA, CusB, CusC and CusF.

The protein localises to the cell inner membrane. Functionally, part of a cation efflux system that mediates resistance to copper and silver. This is Cation efflux system protein CusA (cusA) from Escherichia coli (strain K12).